We begin with the raw amino-acid sequence, 380 residues long: MKNQKIFHLVTVSKSIPLMRGQIEFLRKKNMDVHIVSSDGKELKQYDNEIAHVIPMKRDIALFSDLKSLLKMILLFHKEKPFIVNSGTPKAGLIGTIAAFITQRPIRIYTVRGLRLETVKGFKYFVLYLMEKIAMFCATDIIAISESLKHKIITSNLAKENKITVLGFGSSNGIQFEKFQLDNNKLEEKYHKLLNDNFVIGYVGRIVKDKGIHELIQSFKIIVSKGYNVKLLVIGSLETENSIDESDYLFLTQNPNVVLIKHVSDPISFYNNMNVFVFPTHREGFGNVSIEAQALEVPVITTNVTGAIDTVVNGETGFIVEKGDFKAIAEKIEKLINDESLRETIGHNGRKRVENKFSSQIIWEELESMYNTFLKESEGK.

The protein belongs to the glycosyltransferase group 1 family. Glycosyltransferase 4 subfamily.

It functions in the pathway capsule biogenesis; capsule polysaccharide biosynthesis. Its function is as follows. Required for the biosynthesis of type 1 capsular polysaccharide. In Staphylococcus aureus, this protein is Capsular polysaccharide biosynthesis glycosyltransferase CapM (capM).